We begin with the raw amino-acid sequence, 861 residues long: Nuclear cap-binding protein complex subunit 1 (861 aa).

The Nuclear localization signal signature appears at 22 to 30 (RMPKRQRIP). Residues 36–264 (CKEMMPDIRT…LVRVVLPNVK (229 aa)) enclose the MIF4G domain.

It belongs to the NCBP1 family. In terms of assembly, component of the nuclear cap-binding complex (CBC), a heterodimer composed of STO1/CBC1 and CBC2 that interacts with capped RNAs. The complex interacts strongly with the importin subunit alpha SRP1. The SRP1-CBC trimer also binds to capped RNAs, but formation of the importin alpha/beta heterodimer upon binding of KAP95 to SRP1 in the cytoplasm causes dissociation of CBC from the RNA. The CBC complex is part of the commitment complex 1 (CC1), binding to the cap of pre-mRNA and interacting with U1 snRNP subunits MUD2 and SNU56. The CBC complex is part of the NRD1 complex, composed of CBC2, NAB1, NRD1, SEN1 and STO1/CBC2. The CBC complex also interacts with NPL3 and eIF4G (TIF4631 and TIF4632).

The protein localises to the nucleus. It is found in the cytoplasm. The protein resides in the perinuclear region. Component of the CBC complex, which binds co-transcriptionally to the 5'-cap of pre-mRNAs and is involved in maturation, export and degradation of nuclear mRNAs. The CBC complex is required for efficient pre-mRNA splicing through efficient commitment complex and spliceosome formation. Together with NPL3, the CBC complex is required for export of mRNAs out of the nucleus. The CBC complex is also involved in nuclear mRNA degradation, probably by directing the mRNAs to the sites of degradation. Affects replication of the positive-strand RNA virus BMV. In Saccharomyces cerevisiae (strain ATCC 204508 / S288c) (Baker's yeast), this protein is Nuclear cap-binding protein complex subunit 1 (STO1).